The following is a 154-amino-acid chain: Superoxide dismutase [Cu-Zn] 1 (154 aa).

Residues His47, His49, and His64 each coordinate Cu cation. An intrachain disulfide couples Cys58 to Cys147. The Zn(2+) site is built by His64, His72, His81, and Asp84. Residue His121 coordinates Cu cation. A substrate-binding site is contributed by Arg144.

This sequence belongs to the Cu-Zn superoxide dismutase family. Homodimer. Requires Cu cation as cofactor. It depends on Zn(2+) as a cofactor.

Its subcellular location is the cytoplasm. It catalyses the reaction 2 superoxide + 2 H(+) = H2O2 + O2. In terms of biological role, destroys radicals which are normally produced within the cells and which are toxic to biological systems. This is Superoxide dismutase [Cu-Zn] 1 (SOD1) from Debaryomyces hansenii (strain ATCC 36239 / CBS 767 / BCRC 21394 / JCM 1990 / NBRC 0083 / IGC 2968) (Yeast).